A 262-amino-acid chain; its full sequence is ELL-associated factor 2 (262 aa).

A necessary for interaction with ELL region spans residues 17–104 (LKLGESFEKQ…TGECRLEKLS (88 aa)). A compositionally biased stretch (polar residues) spans 124–144 (LEQQQQQMWNPPRTSNLVQHS). Disordered stretches follow at residues 124–154 (LEQQQQQMWNPPRTSNLVQHSPSEDKLSPTS) and 170–232 (MDQM…ADTT). Ser146, Ser151, and Ser154 each carry phosphoserine. A compositionally biased stretch (low complexity) spans 174–192 (SSCDSSSDSRSSSSSSSED). Positions 177-262 (DSSSDSRSSS…LSESDSDSED (86 aa)) are necessary for transactivation activity. The tract at residues 248–262 (RSDLQLSESDSDSED) is necessary for interaction with TCEA1 and transactivation activity.

It belongs to the EAF family. As to quaternary structure, component of the super elongation complex (SEC), at least composed of EAF1, EAF2, CDK9, MLLT3/AF9, AFF (AFF1 or AFF4), the P-TEFb complex and ELL (ELL, ELL2 or ELL3). Interacts with ELL, ELL2 and TCEA1.

Its subcellular location is the nucleus speckle. Acts as a transcriptional transactivator of ELL, ELL2 and TCEA1 elongation activities. Potent inducer of apoptosis in prostatic and non-prostatic cell lines. This Rattus norvegicus (Rat) protein is ELL-associated factor 2 (Eaf2).